The primary structure comprises 596 residues: Trehalase (596 aa).

Positions 1–23 are cleaved as a signal peptide; sequence MFKLPTISLLLVSWSCLVALSQA. Residues R193, 200–201, N237, and 246–248 contribute to the substrate site; these read WD and RSQ. N-linked (GlcNAc...) asparagine glycosylation is found at N288 and N293. A disordered region spans residues 303–323; the sequence is SSGPRPESYREDVETGEEFPT. Substrate contacts are provided by residues 307–309 and G341; that span reads RPE. D343 acts as the Proton donor/acceptor in catalysis. Residues N359, N451, and N516 are each glycosylated (N-linked (GlcNAc...) asparagine). Catalysis depends on E541, which acts as the Proton donor/acceptor. E556 contributes to the substrate binding site.

This sequence belongs to the glycosyl hydrolase 37 family. As to expression, in the adult brain predominantly expressed in glial cells (at protein level).

The catalysed reaction is alpha,alpha-trehalose + H2O = alpha-D-glucose + beta-D-glucose. In terms of biological role, enzyme that cleaves trehalose to produce 2 glucose molecules that can be used by the glycolytic pathway. Glycolysis is essential in glial cells but not in neurons; neurons rely on the citric acid cycle for their energy needs, and on lactate and alanine secreted into the hemolymph by glial cells to fuel it. This Drosophila melanogaster (Fruit fly) protein is Trehalase.